The sequence spans 877 residues: Phosphoenolpyruvate carboxylase (877 aa).

Active-site residues include His-138 and Lys-543.

It belongs to the PEPCase type 1 family. Mg(2+) is required as a cofactor.

It carries out the reaction oxaloacetate + phosphate = phosphoenolpyruvate + hydrogencarbonate. Its function is as follows. Forms oxaloacetate, a four-carbon dicarboxylic acid source for the tricarboxylic acid cycle. In Aeromonas hydrophila subsp. hydrophila (strain ATCC 7966 / DSM 30187 / BCRC 13018 / CCUG 14551 / JCM 1027 / KCTC 2358 / NCIMB 9240 / NCTC 8049), this protein is Phosphoenolpyruvate carboxylase.